Reading from the N-terminus, the 658-residue chain is MSDDMSMGSPSSAGEQGVLRSMQEVAMSSQEASKMLRTYNIAWWGNNYYDVNELGHISVCPDPDVPEARVDLAKLVKAREAQGQRLPALFCFPQILQHRLRSINAAFKRARESYGYNGDYFLVYPIKVNQHRRVIESLIHSGEPLGLEAGSKAELMAVLAHAGMTRSVIVCNGYKDREYIRLALIGEKMGHKVYLVIEKMSEIAIVLEEAERLNVVPRLGVRARLASQGSGKWQSSGGEKSKFGLAATQVLQLVETLRDAGRLDSLQLLHFHLGSQMANIRDIATGVRESARFYVELHKLGVNIQCFDVGGGLGVDYEGTRSQSDCSVNYGLNEYANNIIWAIGDACEEHGLPHPTVITESGRAVTAHHTVLVSNIIGVERNEYTDPTAPAEDAPRALQNLWETWQEMHKPGTRRSLREWLHDSQMDLHDIHIGYSSGAFSLQERAWAEQLYLSMCHEVQKQLDPQNRAHRPIIDELQERMADKMYVNFSLFQSMPDAWGIDQLFPVLPLEGLDQVPERRAVLLDITCDSDGAIDHYIDGDGIATTMPMPEYDPENPPMLGFFMVGAYQEILGNMHNLFGDTEAVDVFVFPDGSVEVELSDEGDTVADMLQYVQLDPKTLLTHFRDQVKQTDLDDALQQQFLEEFEAGLYGYTYLEDE.

K127 is modified (N6-(pyridoxal phosphate)lysine). A substrate-binding site is contributed by 307-317; sequence FDVGGGLGVDY.

The protein belongs to the Orn/Lys/Arg decarboxylase class-II family. SpeA subfamily. The cofactor is Mg(2+). It depends on pyridoxal 5'-phosphate as a cofactor.

The enzyme catalyses L-arginine + H(+) = agmatine + CO2. It participates in amine and polyamine biosynthesis; agmatine biosynthesis; agmatine from L-arginine: step 1/1. Catalyzes the biosynthesis of agmatine from arginine. In Salmonella typhi, this protein is Biosynthetic arginine decarboxylase.